The sequence spans 138 residues: Secreted RxLR effector protein 91 (138 aa).

A signal peptide spans methionine 1 to cysteine 18. Positions arginine 34 to arginine 37 match the RxLR motif. The N-linked (GlcNAc...) asparagine glycan is linked to asparagine 93.

This sequence belongs to the RxLR effector family.

Its subcellular location is the secreted. It localises to the host nucleus. In terms of biological role, secreted effector that completely suppresses the host cell death induced by cell death-inducing proteins. The chain is Secreted RxLR effector protein 91 from Plasmopara viticola (Downy mildew of grapevine).